The following is a 119-amino-acid chain: Ribonuclease P protein component (119 aa).

The protein belongs to the RnpA family. As to quaternary structure, consists of a catalytic RNA component (M1 or rnpB) and a protein subunit.

The enzyme catalyses Endonucleolytic cleavage of RNA, removing 5'-extranucleotides from tRNA precursor.. RNaseP catalyzes the removal of the 5'-leader sequence from pre-tRNA to produce the mature 5'-terminus. It can also cleave other RNA substrates such as 4.5S RNA. The protein component plays an auxiliary but essential role in vivo by binding to the 5'-leader sequence and broadening the substrate specificity of the ribozyme. The protein is Ribonuclease P protein component of Listeria monocytogenes serotype 4b (strain CLIP80459).